Here is a 415-residue protein sequence, read N- to C-terminus: Lipoyl synthase, mitochondrial (415 aa).

The transit peptide at 1 to 32 (MAASTNRLRFLYSSARTVPQTGSITPISRRTY) directs the protein to the mitochondrion. Polar residues predominate over residues 22 to 32 (GSITPISRRTY). The disordered stretch occupies residues 22–53 (GSITPISRRTYATTEPSPSATGAPATARKRTN). Low complexity predominate over residues 33-47 (ATTEPSPSATGAPAT). Residues Cys132, Cys137, Cys143, Cys163, Cys167, Cys170, and Ser378 each contribute to the [4Fe-4S] cluster site. Positions 146–367 (GSDKSAATAT…RQRALDMGFL (222 aa)) constitute a Radical SAM core domain. The disordered stretch occupies residues 395 to 415 (AAGTAGESVTDSKAAVDEATR).

The protein belongs to the radical SAM superfamily. Lipoyl synthase family. The cofactor is [4Fe-4S] cluster.

It is found in the mitochondrion. The enzyme catalyses [[Fe-S] cluster scaffold protein carrying a second [4Fe-4S](2+) cluster] + N(6)-octanoyl-L-lysyl-[protein] + 2 oxidized [2Fe-2S]-[ferredoxin] + 2 S-adenosyl-L-methionine + 4 H(+) = [[Fe-S] cluster scaffold protein] + N(6)-[(R)-dihydrolipoyl]-L-lysyl-[protein] + 4 Fe(3+) + 2 hydrogen sulfide + 2 5'-deoxyadenosine + 2 L-methionine + 2 reduced [2Fe-2S]-[ferredoxin]. Its pathway is protein modification; protein lipoylation via endogenous pathway; protein N(6)-(lipoyl)lysine from octanoyl-[acyl-carrier-protein]: step 2/2. Catalyzes the radical-mediated insertion of two sulfur atoms into the C-6 and C-8 positions of the octanoyl moiety bound to the lipoyl domains of lipoate-dependent enzymes, thereby converting the octanoylated domains into lipoylated derivatives. In Aspergillus oryzae (strain ATCC 42149 / RIB 40) (Yellow koji mold), this protein is Lipoyl synthase, mitochondrial.